We begin with the raw amino-acid sequence, 365 residues long: Histidinol-phosphate aminotransferase (365 aa).

A disordered region spans residues 1-21 (MSRPVPNPGILDIAPYTPGKS). Lysine 221 carries the N6-(pyridoxal phosphate)lysine modification.

It belongs to the class-II pyridoxal-phosphate-dependent aminotransferase family. Histidinol-phosphate aminotransferase subfamily. Homodimer. The cofactor is pyridoxal 5'-phosphate.

The enzyme catalyses L-histidinol phosphate + 2-oxoglutarate = 3-(imidazol-4-yl)-2-oxopropyl phosphate + L-glutamate. It participates in amino-acid biosynthesis; L-histidine biosynthesis; L-histidine from 5-phospho-alpha-D-ribose 1-diphosphate: step 7/9. The polypeptide is Histidinol-phosphate aminotransferase (Rhodopseudomonas palustris (strain ATCC BAA-98 / CGA009)).